Consider the following 519-residue polypeptide: Nif-specific regulatory protein (519 aa).

The Sigma-54 factor interaction domain occupies 177 to 405 (IVGESPALKR…LDNCVQRTAT (229 aa)). Residues 205–212 (GESGTGKE) and 268–277 (ANGGTLLLDE) contribute to the ATP site. Positions 406–476 (LASSNTITSS…ATIEAAGLTE (71 aa)) are inter-domain linker. A divalent metal cation-binding residues include C419 and C424. Positions 477–519 (RDRLIKAMERAGWVQAKAARILGKTPRQVGYALRRHRIDVKKE) are C-terminal DNA-binding domain. A DNA-binding region (H-T-H motif) is located at residues 491–510 (QAKAARILGKTPRQVGYALR).

As to quaternary structure, interacts with sigma-54.

Required for activation of most nif operons, which are directly involved in nitrogen fixation. This is Nif-specific regulatory protein (nifA) from Rhizobium leguminosarum.